A 160-amino-acid chain; its full sequence is Putative 4-hydroxy-4-methyl-2-oxoglutarate aldolase (160 aa).

Residues 76 to 79 (GDMI) and Arg98 contribute to the substrate site. Residue Asp99 participates in a divalent metal cation binding.

This sequence belongs to the class II aldolase/RraA-like family. Homotrimer. The cofactor is a divalent metal cation.

The catalysed reaction is 4-hydroxy-4-methyl-2-oxoglutarate = 2 pyruvate. It carries out the reaction oxaloacetate + H(+) = pyruvate + CO2. Functionally, catalyzes the aldol cleavage of 4-hydroxy-4-methyl-2-oxoglutarate (HMG) into 2 molecules of pyruvate. Also contains a secondary oxaloacetate (OAA) decarboxylase activity due to the common pyruvate enolate transition state formed following C-C bond cleavage in the retro-aldol and decarboxylation reactions. The chain is Putative 4-hydroxy-4-methyl-2-oxoglutarate aldolase from Alcanivorax borkumensis (strain ATCC 700651 / DSM 11573 / NCIMB 13689 / SK2).